Reading from the N-terminus, the 218-residue chain is 3,4-dihydroxy-2-butanone 4-phosphate synthase (218 aa).

D-ribulose 5-phosphate contacts are provided by residues 37–38, Asp42, 150–154, and Glu174; these read RE and RSGHT. Residue Glu38 coordinates Mg(2+). Residue His153 coordinates Mg(2+).

This sequence belongs to the DHBP synthase family. In terms of assembly, homodimer. Requires Mg(2+) as cofactor. The cofactor is Mn(2+).

It catalyses the reaction D-ribulose 5-phosphate = (2S)-2-hydroxy-3-oxobutyl phosphate + formate + H(+). The protein operates within cofactor biosynthesis; riboflavin biosynthesis; 2-hydroxy-3-oxobutyl phosphate from D-ribulose 5-phosphate: step 1/1. Its function is as follows. Catalyzes the conversion of D-ribulose 5-phosphate to formate and 3,4-dihydroxy-2-butanone 4-phosphate. This is 3,4-dihydroxy-2-butanone 4-phosphate synthase from Hamiltonella defensa subsp. Acyrthosiphon pisum (strain 5AT).